Reading from the N-terminus, the 399-residue chain is Beta sliding clamp (399 aa).

Belongs to the beta sliding clamp family. In terms of assembly, forms a ring-shaped head-to-tail homodimer around DNA which binds and tethers DNA polymerases and other proteins to the DNA. The DNA replisome complex has a single clamp-loading complex (3 tau and 1 each of delta, delta', psi and chi subunits) which binds 3 Pol III cores (1 core on the leading strand and 2 on the lagging strand) each with a beta sliding clamp dimer. Additional proteins in the replisome are other copies of gamma, psi and chi, Ssb, DNA helicase and RNA primase.

Its subcellular location is the cytoplasm. Confers DNA tethering and processivity to DNA polymerases and other proteins. Acts as a clamp, forming a ring around DNA (a reaction catalyzed by the clamp-loading complex) which diffuses in an ATP-independent manner freely and bidirectionally along dsDNA. Initially characterized for its ability to contact the catalytic subunit of DNA polymerase III (Pol III), a complex, multichain enzyme responsible for most of the replicative synthesis in bacteria; Pol III exhibits 3'-5' exonuclease proofreading activity. The beta chain is required for initiation of replication as well as for processivity of DNA replication. The protein is Beta sliding clamp (dnaN) of Mycobacterium leprae (strain TN).